Consider the following 512-residue polypeptide: MVAHDAAAGVTGEGAGPPVRRAPARTYQVRTYGCQMNVHDSERLAGLLEAAGYRRATDGSEADVVVFNTCAVRENADNRLYGNLSHLAPRKRANPDMQIAVGGCLAQKDRDAVLRRAPWVDVVFGTHNIGSLPTLLERARHNKVAQVEIAEALQQFPSSLPSSRESAYAAWVSISVGCNNSCTFCIVPSLRGREVDRSPADILAEVRSLVNDGVLEVTLLGQNVNAYGVSFADPALPRNRGAFAELLRACGDIDGLERVRFTSPHPAEFTDDVIEAMAQTRNVCPALHMPLQSGSDRILRAMRRSYRAERYLGIIERVRAAIPHAAITTDLIVGFPGETEEDFAATLDVVRRARFAAAFTFQYSKRPGTPAAQLDGQLPKAVVQERYERLIALQEQISLEANRALVGQAVEVLVATGEGRKDTVTARMSGRARDGRLVHFTAGQPRVRPGDVITTKVTEAAPHHLIADAGVLTHRRTRAGDAHTAGQPGRAVGLGMPGVGLPVSAAKPGGCR.

Residues 1–22 (MVAHDAAAGVTGEGAGPPVRRA) are disordered. One can recognise an MTTase N-terminal domain in the interval 25 to 141 (RTYQVRTYGC…LPTLLERARH (117 aa)). The [4Fe-4S] cluster site is built by C34, C70, C104, C178, C182, and C185. Positions 164–400 (RESAYAAWVS…IALQEQISLE (237 aa)) constitute a Radical SAM core domain. Residues 403-471 (RALVGQAVEV…PHHLIADAGV (69 aa)) form the TRAM domain.

This sequence belongs to the methylthiotransferase family. MiaB subfamily. Monomer. The cofactor is [4Fe-4S] cluster.

It localises to the cytoplasm. It carries out the reaction N(6)-dimethylallyladenosine(37) in tRNA + (sulfur carrier)-SH + AH2 + 2 S-adenosyl-L-methionine = 2-methylsulfanyl-N(6)-dimethylallyladenosine(37) in tRNA + (sulfur carrier)-H + 5'-deoxyadenosine + L-methionine + A + S-adenosyl-L-homocysteine + 2 H(+). Catalyzes the methylthiolation of N6-(dimethylallyl)adenosine (i(6)A), leading to the formation of 2-methylthio-N6-(dimethylallyl)adenosine (ms(2)i(6)A) at position 37 in tRNAs that read codons beginning with uridine. This is tRNA-2-methylthio-N(6)-dimethylallyladenosine synthase from Mycobacterium bovis (strain ATCC BAA-935 / AF2122/97).